Consider the following 150-residue polypeptide: D-aminoacyl-tRNA deacylase (150 aa).

A Gly-cisPro motif, important for rejection of L-amino acids motif is present at residues 138–139 (GP).

This sequence belongs to the DTD family. In terms of assembly, homodimer.

Its subcellular location is the cytoplasm. It carries out the reaction glycyl-tRNA(Ala) + H2O = tRNA(Ala) + glycine + H(+). The catalysed reaction is a D-aminoacyl-tRNA + H2O = a tRNA + a D-alpha-amino acid + H(+). Functionally, an aminoacyl-tRNA editing enzyme that deacylates mischarged D-aminoacyl-tRNAs. Also deacylates mischarged glycyl-tRNA(Ala), protecting cells against glycine mischarging by AlaRS. Acts via tRNA-based rather than protein-based catalysis; rejects L-amino acids rather than detecting D-amino acids in the active site. By recycling D-aminoacyl-tRNA to D-amino acids and free tRNA molecules, this enzyme counteracts the toxicity associated with the formation of D-aminoacyl-tRNA entities in vivo and helps enforce protein L-homochirality. In Chlorobium limicola (strain DSM 245 / NBRC 103803 / 6330), this protein is D-aminoacyl-tRNA deacylase.